Reading from the N-terminus, the 577-residue chain is ER degradation-enhancing alpha-mannosidase-like protein 2 (577 aa).

The first 21 residues, 1 to 21 (MPFRLLIPLGLVCVLLPLHHG), serve as a signal peptide directing secretion. N-linked (GlcNAc...) asparagine glycosylation is found at asparagine 90, asparagine 112, asparagine 289, and asparagine 450. The segment at 513 to 561 (PKRAQRKTVRSGPWEPQSGPATLSSPANQPREKQPAQQRTPLLSCPSQP) is disordered. Polar residues-rich tracts occupy residues 531–540 (GPATLSSPAN) and 547–561 (PAQQRTPLLSCPSQP).

The protein belongs to the glycosyl hydrolase 47 family. In terms of processing, N-glycosylated.

The protein resides in the endoplasmic reticulum lumen. Involved in the endoplasmic reticulum-associated degradation (ERAD) pathway that targets misfolded glycoproteins for degradation in an N-glycan-dependent manner. May initiate ERAD by promoting the first mannose trimming step of ERAD substrates, from Man9GlcNAc2 to Man8GlcNAc2. Seems to recognize and bind to exposed hydrophobic regions in target proteins. The sequence is that of ER degradation-enhancing alpha-mannosidase-like protein 2 from Mus musculus (Mouse).